We begin with the raw amino-acid sequence, 306 residues long: Agmatinase (306 aa).

Positions 126, 149, 151, 153, 230, and 232 each coordinate Mn(2+).

This sequence belongs to the arginase family. Agmatinase subfamily. Mn(2+) serves as cofactor.

The enzyme catalyses agmatine + H2O = urea + putrescine. It functions in the pathway amine and polyamine biosynthesis; putrescine biosynthesis via agmatine pathway; putrescine from agmatine: step 1/1. Its function is as follows. Catalyzes the formation of putrescine from agmatine. The sequence is that of Agmatinase from Citrobacter koseri (strain ATCC BAA-895 / CDC 4225-83 / SGSC4696).